The chain runs to 129 residues: Small ribosomal subunit protein uS11 (129 aa).

Belongs to the universal ribosomal protein uS11 family. In terms of assembly, part of the 30S ribosomal subunit. Interacts with proteins S7 and S18. Binds to IF-3.

Functionally, located on the platform of the 30S subunit, it bridges several disparate RNA helices of the 16S rRNA. Forms part of the Shine-Dalgarno cleft in the 70S ribosome. The sequence is that of Small ribosomal subunit protein uS11 from Xanthobacter autotrophicus (strain ATCC BAA-1158 / Py2).